The following is a 225-amino-acid chain: UPF0758 protein NMC1174 (225 aa).

The MPN domain occupies 102 to 224 (VLSDPDTVAD…VRSFRQLGLM (123 aa)). The Zn(2+) site is built by His-173, His-175, and Asp-186. Positions 173–186 (HNHPGGSPEPSQED) match the JAMM motif motif.

This sequence belongs to the UPF0758 family.

This is UPF0758 protein NMC1174 from Neisseria meningitidis serogroup C / serotype 2a (strain ATCC 700532 / DSM 15464 / FAM18).